The sequence spans 102 residues: Large ribosomal subunit protein bL21 (102 aa).

This sequence belongs to the bacterial ribosomal protein bL21 family. Part of the 50S ribosomal subunit. Contacts protein L20.

Its function is as follows. This protein binds to 23S rRNA in the presence of protein L20. This Geobacillus sp. (strain WCH70) protein is Large ribosomal subunit protein bL21.